Consider the following 168-residue polypeptide: Photosystem I assembly protein Ycf3 (168 aa).

3 TPR repeats span residues 35–68, 72–105, and 120–153; these read AFTYYRDGMSAQSEGNYAEALQNYYEAMRLEIDP, SYILYNIGLIHTSNGEHTKALEYYFRALERNPFL, and GEQAIQQGDSEIAEAWFDQAAEYWKQAIALTPGN.

It belongs to the Ycf3 family.

It is found in the plastid. The protein localises to the chloroplast thylakoid membrane. In terms of biological role, essential for the assembly of the photosystem I (PSI) complex. May act as a chaperone-like factor to guide the assembly of the PSI subunits. The chain is Photosystem I assembly protein Ycf3 from Nicotiana sylvestris (Wood tobacco).